Here is an 88-residue protein sequence, read N- to C-terminus: FXYD domain-containing ion transport regulator 3 (88 aa).

A signal peptide (not cleaved) is located at residues 1–20 (MQEVVLSLLVLLAGLPTLDA). Over 1–38 (MQEVVLSLLVLLAGLPTLDANDPENKNDPFYYDWYSLR) the chain is Extracellular. Residues 39–59 (VGGLICAGILCALGIIVLMSG) traverse the membrane as a helical segment. The Cytoplasmic segment spans residues 60 to 88 (KCKCKFRQKPSHRPGEGPPLITPGSAHNC). A disordered region spans residues 67 to 88 (QKPSHRPGEGPPLITPGSAHNC).

It belongs to the FXYD family. As to quaternary structure, regulatory subunit of the sodium/potassium-transporting ATPase which is composed of a catalytic alpha subunit, a non-catalytic beta subunit and an additional regulatory subunit. Interacts with catalytic alpha subunit ATP1A1. Also interacts with non-catalytic beta subunit ATP1B1. Interacts with the ATP1A1-ATP1B1, ATP1A2-ATP1B1 and ATP1A3-ATP1B1 NKA isozymes. Glutathionylated. As to expression, expressed at high levels in heart, skeletal muscle and liver with low levels of expression in breast, brain, lung, stomach and colon. In the gastric gland, mainly expressed in the mucus cells forming the upper part of the gland and is absent from the parietal cells.

It is found in the cell membrane. Associates with and regulates the activity of the sodium/potassium-transporting ATPase (NKA) which transports Na(+) out of the cell and K(+) into the cell. Reduces glutathionylation of the NKA beta-1 subunit ATP1B1, thus reversing glutathionylation-mediated inhibition of ATP1B1. Induces a hyperpolarization-activated chloride current when expressed in Xenopus oocytes. This chain is FXYD domain-containing ion transport regulator 3 (Fxyd3), found in Mus musculus (Mouse).